The chain runs to 549 residues: Glucose-6-phosphate isomerase (549 aa).

Glu-353 (proton donor) is an active-site residue. Active-site residues include His-384 and Lys-512.

It belongs to the GPI family.

It localises to the cytoplasm. It catalyses the reaction alpha-D-glucose 6-phosphate = beta-D-fructose 6-phosphate. The protein operates within carbohydrate biosynthesis; gluconeogenesis. Its pathway is carbohydrate degradation; glycolysis; D-glyceraldehyde 3-phosphate and glycerone phosphate from D-glucose: step 2/4. In terms of biological role, catalyzes the reversible isomerization of glucose-6-phosphate to fructose-6-phosphate. The protein is Glucose-6-phosphate isomerase of Alteromonas mediterranea (strain DSM 17117 / CIP 110805 / LMG 28347 / Deep ecotype).